Consider the following 312-residue polypeptide: Glyoxylate/hydroxypyruvate reductase A (312 aa).

Arginine 227 is a catalytic residue. The Proton donor role is filled by histidine 275.

Belongs to the D-isomer specific 2-hydroxyacid dehydrogenase family. GhrA subfamily.

The protein resides in the cytoplasm. It carries out the reaction glycolate + NADP(+) = glyoxylate + NADPH + H(+). The catalysed reaction is (R)-glycerate + NAD(+) = 3-hydroxypyruvate + NADH + H(+). The enzyme catalyses (R)-glycerate + NADP(+) = 3-hydroxypyruvate + NADPH + H(+). Its function is as follows. Catalyzes the NADPH-dependent reduction of glyoxylate and hydroxypyruvate into glycolate and glycerate, respectively. The polypeptide is Glyoxylate/hydroxypyruvate reductase A (Escherichia coli (strain ATCC 8739 / DSM 1576 / NBRC 3972 / NCIMB 8545 / WDCM 00012 / Crooks)).